Consider the following 360-residue polypeptide: Phospho-N-acetylmuramoyl-pentapeptide-transferase (360 aa).

10 helical membrane passes run 25-45 (RGIL…PWMI), 73-93 (TMGG…WADL), 97-117 (YVWV…VDDY), 132-152 (WKYF…YMTA), 168-188 (VSIP…VGSS), 199-219 (GLAI…CYLS), 236-256 (AGEL…FLWF), 263-283 (VFMG…IAVI), 288-308 (VVLF…IIQV), and 338-358 (VIVR…ATLK).

This sequence belongs to the glycosyltransferase 4 family. MraY subfamily. Mg(2+) serves as cofactor.

The protein resides in the cell inner membrane. It catalyses the reaction UDP-N-acetyl-alpha-D-muramoyl-L-alanyl-gamma-D-glutamyl-meso-2,6-diaminopimeloyl-D-alanyl-D-alanine + di-trans,octa-cis-undecaprenyl phosphate = di-trans,octa-cis-undecaprenyl diphospho-N-acetyl-alpha-D-muramoyl-L-alanyl-D-glutamyl-meso-2,6-diaminopimeloyl-D-alanyl-D-alanine + UMP. It functions in the pathway cell wall biogenesis; peptidoglycan biosynthesis. Its function is as follows. Catalyzes the initial step of the lipid cycle reactions in the biosynthesis of the cell wall peptidoglycan: transfers peptidoglycan precursor phospho-MurNAc-pentapeptide from UDP-MurNAc-pentapeptide onto the lipid carrier undecaprenyl phosphate, yielding undecaprenyl-pyrophosphoryl-MurNAc-pentapeptide, known as lipid I. This Ectopseudomonas mendocina (strain ymp) (Pseudomonas mendocina) protein is Phospho-N-acetylmuramoyl-pentapeptide-transferase.